A 65-amino-acid chain; its full sequence is Hainantoxin-X (65 aa).

The signal sequence occupies residues 1 to 20 (MNMKILVLVAVLCLVVSTHA). Residues 21–37 (ERHSKTDMEDSPMIQER) constitute a propeptide that is removed on maturation. 3 cysteine pairs are disulfide-bonded: C39/C56, C46/C59, and C55/C64.

This sequence belongs to the neurotoxin 36 family. 02 subfamily. In terms of tissue distribution, expressed by the venom gland.

The protein localises to the secreted. Reversibly blocks N-type calcium channels (Cav2.2/CACNA1B) in rat dorsal root ganglion cells. Elicits no toxic symptoms in either vertebrates or invertebrates during a period of 48 hours post-injection, when it was assayed in vivo by direct injection into mice and cockroaches. This Cyriopagopus hainanus (Chinese bird spider) protein is Hainantoxin-X.